Consider the following 545-residue polypeptide: MKTNYIFVTGGVVSSLGKGIAAASLAAILEARGLNVTIMKLDPYINVDPGTMSPIQHGEVFVTEDGAETDLDLGHYERFIRTKMTRRNNFTTGRVYSEVLRKERRGDYLGATVQVIPHITNEIKDRIISGGEGHDVVLVEVGGTVGDIESLPFLEAIRQMAVEVGREHTLYLHLTLVPYLAAAGEVKTKPTQHSVKELLSIGIQPDILICRSDRVIPANERAKIALFCNVPEKAVISLKDVDSIYKIPGLLKSQGLDDYICKRFSLDCPEANLSEWEQVIYEEANPSGEVTIGMVGKYVELPDAYKSVIEALKHGGLKNRLTVNIKLLDSQDVETRGVELLKGLDAILVPGGFGGRGVEGKIMTARYARENNIPYLGICLGMQVALIEFSRHVAGLEKASSTEFEPDCRLPVVGLITEWRDEDGNLEVRSEESDLGGTMRVGGQPCHLTKDSLVRTLYGADTIVERHRHRYEVNNLLLKRIEDAGLRVAGRSVDNKLVEIIEIPDHPWFVACQFHPEFTSTPRDGHPLFTGFVKAAGKYQKGQLK.

Residues 1 to 266 (MKTNYIFVTG…DDYICKRFSL (266 aa)) form an amidoligase domain region. Serine 14 lines the CTP pocket. Serine 14 lines the UTP pocket. ATP-binding positions include 15 to 20 (SLGKGI) and aspartate 72. The Mg(2+) site is built by aspartate 72 and glutamate 140. CTP is bound by residues 147–149 (DIE), 187–192 (KTKPTQ), and lysine 223. Residues 187-192 (KTKPTQ) and lysine 223 each bind UTP. An ATP-binding site is contributed by 239–241 (KDV). A Glutamine amidotransferase type-1 domain is found at 291–542 (TIGMVGKYVE…VKAAGKYQKG (252 aa)). Glycine 352 is an L-glutamine binding site. Cysteine 379 serves as the catalytic Nucleophile; for glutamine hydrolysis. L-glutamine contacts are provided by residues 380–383 (LGMQ), glutamate 403, and arginine 470. Residues histidine 515 and glutamate 517 contribute to the active site.

The protein belongs to the CTP synthase family. In terms of assembly, homotetramer.

It catalyses the reaction UTP + L-glutamine + ATP + H2O = CTP + L-glutamate + ADP + phosphate + 2 H(+). The catalysed reaction is L-glutamine + H2O = L-glutamate + NH4(+). The enzyme catalyses UTP + NH4(+) + ATP = CTP + ADP + phosphate + 2 H(+). It functions in the pathway pyrimidine metabolism; CTP biosynthesis via de novo pathway; CTP from UDP: step 2/2. Its activity is regulated as follows. Allosterically activated by GTP, when glutamine is the substrate; GTP has no effect on the reaction when ammonia is the substrate. The allosteric effector GTP functions by stabilizing the protein conformation that binds the tetrahedral intermediate(s) formed during glutamine hydrolysis. Inhibited by the product CTP, via allosteric rather than competitive inhibition. Its function is as follows. Catalyzes the ATP-dependent amination of UTP to CTP with either L-glutamine or ammonia as the source of nitrogen. Regulates intracellular CTP levels through interactions with the four ribonucleotide triphosphates. The protein is CTP synthase of Photorhabdus laumondii subsp. laumondii (strain DSM 15139 / CIP 105565 / TT01) (Photorhabdus luminescens subsp. laumondii).